The chain runs to 300 residues: Actin-related protein 2/3 complex subunit 2-A (300 aa).

Belongs to the ARPC2 family. As to quaternary structure, component of the Arp2/3 complex composed of actr2/arp2, actr3/arp3, arpc1 (arpc1a or arpc1b), arpc2, arpc3, arpc4 and arpc5.

Its subcellular location is the cytoplasm. It localises to the cytoskeleton. The protein localises to the cell projection. The protein resides in the nucleus. Functionally, actin-binding component of the Arp2/3 complex, a multiprotein complex that mediates actin polymerization upon stimulation by nucleation-promoting factor (NPF). The Arp2/3 complex mediates the formation of branched actin networks in the cytoplasm, providing the force for cell motility. In addition to its role in the cytoplasmic cytoskeleton, the Arp2/3 complex also promotes actin polymerization in the nucleus, thereby regulating gene transcription and repair of damaged DNA. The Arp2/3 complex promotes homologous recombination (HR) repair in response to DNA damage by promoting nuclear actin polymerization, leading to drive motility of double-strand breaks (DSBs). The polypeptide is Actin-related protein 2/3 complex subunit 2-A (arpc2-a) (Xenopus laevis (African clawed frog)).